A 215-amino-acid polypeptide reads, in one-letter code: Cytochrome b6 (215 aa).

A helical membrane pass occupies residues 32 to 52; that stretch reads IFYCLGGITLTCFLVQVATGF. Cys35 is a binding site for heme c. Residues His86 and His100 each coordinate heme b. A run of 3 helical transmembrane segments spans residues 90–110, 116–136, and 186–206; these read ASMM…TGGF, LTWV…VTGY, and LHTF…FLMI. The heme b site is built by His187 and His202.

This sequence belongs to the cytochrome b family. PetB subfamily. The 4 large subunits of the cytochrome b6-f complex are cytochrome b6, subunit IV (17 kDa polypeptide, PetD), cytochrome f and the Rieske protein, while the 4 small subunits are PetG, PetL, PetM and PetN. The complex functions as a dimer. Heme b serves as cofactor. Heme c is required as a cofactor.

Its subcellular location is the plastid. It localises to the chloroplast thylakoid membrane. Its function is as follows. Component of the cytochrome b6-f complex, which mediates electron transfer between photosystem II (PSII) and photosystem I (PSI), cyclic electron flow around PSI, and state transitions. The polypeptide is Cytochrome b6 (Huperzia lucidula (Shining clubmoss)).